We begin with the raw amino-acid sequence, 308 residues long: tRNA-cytidine(32) 2-sulfurtransferase (308 aa).

The short motif at 39–44 (SGGKDS) is the PP-loop motif element. [4Fe-4S] cluster contacts are provided by cysteine 114, cysteine 117, and cysteine 205.

It belongs to the TtcA family. Homodimer. Requires Mg(2+) as cofactor. The cofactor is [4Fe-4S] cluster.

It localises to the cytoplasm. The enzyme catalyses cytidine(32) in tRNA + S-sulfanyl-L-cysteinyl-[cysteine desulfurase] + AH2 + ATP = 2-thiocytidine(32) in tRNA + L-cysteinyl-[cysteine desulfurase] + A + AMP + diphosphate + H(+). The protein operates within tRNA modification. Its function is as follows. Catalyzes the ATP-dependent 2-thiolation of cytidine in position 32 of tRNA, to form 2-thiocytidine (s(2)C32). The sulfur atoms are provided by the cysteine/cysteine desulfurase (IscS) system. The sequence is that of tRNA-cytidine(32) 2-sulfurtransferase from Cupriavidus taiwanensis (strain DSM 17343 / BCRC 17206 / CCUG 44338 / CIP 107171 / LMG 19424 / R1) (Ralstonia taiwanensis (strain LMG 19424)).